Here is a 416-residue protein sequence, read N- to C-terminus: Solute carrier family 25 member 46 (416 aa).

Basic and acidic residues predominate over residues 1-13 (MQPRRPDRFDGLE). The interval 1-91 (MQPRRPDRFD…GEESSSSSSG (91 aa)) is disordered. Residues 37 to 49 (SFSSSGDLSQHWV) show a composition bias toward polar residues. A compositionally biased stretch (low complexity) spans 82 to 91 (GEESSSSSSG). Residues 94–185 (HLNRFAGFGI…GMLSEFTHLP (92 aa)) form a Solcar 1 repeat. 6 consecutive transmembrane segments (helical) span residues 101–121 (FGIGLASLFTENVLAHPCIVL), 161–181 (MGSTFIVQGISLGAEGMLSEF), 197–217 (IGGHLLLKGLVYVIVTPFYSA), 256–276 (LLPLLVLTFPTVLHGILHYII), 312–332 (FPELIANFAASLCADVLLYPL), and 381–401 (LGFYKGFGAVVVQYTLHAIVL). The stretch at 309–414 (EDYFPELIAN…KIIYSSVVQT (106 aa)) is one Solcar 2 repeat.

The protein belongs to the mitochondrial carrier (TC 2.A.29) family.

It is found in the mitochondrion outer membrane. May play a role in mitochondrial dynamics by controlling mitochondrial membrane fission. This is Solute carrier family 25 member 46 (slc25a46) from Xenopus tropicalis (Western clawed frog).